A 514-amino-acid polypeptide reads, in one-letter code: Threonine synthase (514 aa).

Lys124 is modified (N6-(pyridoxal phosphate)lysine). Pyridoxal 5'-phosphate is bound by residues Gly277, Asn278, Phe279, Asp281, and Thr449. Ser467 is subject to Phosphoserine.

This sequence belongs to the threonine synthase family. Pyridoxal 5'-phosphate serves as cofactor.

The enzyme catalyses O-phospho-L-homoserine + H2O = L-threonine + phosphate. It functions in the pathway amino-acid biosynthesis; L-threonine biosynthesis; L-threonine from L-aspartate: step 5/5. Functionally, catalyzes the gamma-elimination of phosphate from L-phosphohomoserine and the beta-addition of water to produce L-threonine. The chain is Threonine synthase (THR4) from Saccharomyces cerevisiae (strain ATCC 204508 / S288c) (Baker's yeast).